A 260-amino-acid polypeptide reads, in one-letter code: Ribosomal RNA small subunit methyltransferase J (260 aa).

S-adenosyl-L-methionine-binding positions include Arg-108–Asp-109, Glu-124–Arg-125, and Asp-178.

The protein belongs to the methyltransferase superfamily. RsmJ family.

It localises to the cytoplasm. It catalyses the reaction guanosine(1516) in 16S rRNA + S-adenosyl-L-methionine = N(2)-methylguanosine(1516) in 16S rRNA + S-adenosyl-L-homocysteine + H(+). Functionally, specifically methylates the guanosine in position 1516 of 16S rRNA. The chain is Ribosomal RNA small subunit methyltransferase J from Ectopseudomonas mendocina (strain ymp) (Pseudomonas mendocina).